Here is a 357-residue protein sequence, read N- to C-terminus: Sulfate/thiosulfate import ATP-binding protein CysA (357 aa).

In terms of domain architecture, ABC transporter spans 3–237 (IQIQGVSKQY…PASPFVYDFL (235 aa)). 35 to 42 (GPSGSGKT) contributes to the ATP binding site.

Belongs to the ABC transporter superfamily. Sulfate/tungstate importer (TC 3.A.1.6) family. In terms of assembly, the complex is composed of two ATP-binding proteins (CysA), two transmembrane proteins (CysT and CysW) and a solute-binding protein (CysP).

It is found in the cell membrane. The catalysed reaction is sulfate(out) + ATP + H2O = sulfate(in) + ADP + phosphate + H(+). It catalyses the reaction thiosulfate(out) + ATP + H2O = thiosulfate(in) + ADP + phosphate + H(+). Functionally, part of the ABC transporter complex CysAWTP involved in sulfate/thiosulfate import. Responsible for energy coupling to the transport system. In Bacillus cereus (strain ATCC 10987 / NRS 248), this protein is Sulfate/thiosulfate import ATP-binding protein CysA.